Here is a 1158-residue protein sequence, read N- to C-terminus: Putative HERC2-like protein 3 (1158 aa).

The segment at 281–302 is disordered; that stretch reads PRKKRVPKKPESTDDEEKIGNE. Residues 293-302 show a composition bias toward acidic residues; sequence TDDEEKIGNE. Residues 587-660 form the MIB/HERC2 domain; the sequence is SGPELAAMMK…NYDLKLAELP (74 aa). The disordered stretch occupies residues 662–684; sequence PAQPSAEDSDTEDDSEAEQTERN. Acidic residues predominate over residues 668–679; sequence EDSDTEDDSEAE.

The chain is Putative HERC2-like protein 3 (HERC2P3) from Homo sapiens (Human).